The following is a 600-amino-acid chain: ATP-dependent RNA helicase DDX55 (600 aa).

Positions 9-37 (WESLQVPLHPRVLGALRELGFPHMTPVQS) match the Q motif motif. In terms of domain architecture, Helicase ATP-binding spans 40 to 223 (IPLFMKNKDV…RAGLRNPVRI (184 aa)). 53-60 (AVTGSGKT) contributes to the ATP binding site. The short motif at 171-174 (DEAD) is the DEAD box element. The Helicase C-terminal domain maps to 254–402 (KFNQLVHFLR…EMSLQRNTID (149 aa)). A compositionally biased stretch (basic and acidic residues) spans 499 to 513 (LEQKRKERSENEGRK). The disordered stretch occupies residues 499–551 (LEQKRKERSENEGRKKFIKNKAWSKQKAKKERKKKMNAKRKKDEGSDIDDEDM). The span at 514 to 538 (KFIKNKAWSKQKAKKERKKKMNAKR) shows a compositional bias: basic residues. An important for nuclear localization region spans residues 533-562 (KMNAKRKKDEGSDIDDEDMEELLNDTRLLK). Ser-544 and Ser-594 each carry phosphoserine.

This sequence belongs to the DEAD box helicase family. DDX55/SPB4 subfamily. As to quaternary structure, interacts with 28S rRNA. Interacts with double-stranded RNA substrates in vitro; the interaction stimulates ATPase activity.

The protein resides in the nucleus. It localises to the nucleoplasm. The enzyme catalyses ATP + H2O = ADP + phosphate + H(+). Probable ATP-binding RNA helicase. Has ATPase activity and is involved in the maturation of precursor large subunit rRNAs. This chain is ATP-dependent RNA helicase DDX55 (Ddx55), found in Mus musculus (Mouse).